Consider the following 81-residue polypeptide: Acyl carrier protein (81 aa).

In terms of domain architecture, Carrier spans 4 to 79 (QEIFEKVQTI…QAVDFISQKV (76 aa)). The residue at position 39 (serine 39) is an O-(pantetheine 4'-phosphoryl)serine.

Belongs to the acyl carrier protein (ACP) family. Post-translationally, 4'-phosphopantetheine is transferred from CoA to a specific serine of apo-ACP by AcpS. This modification is essential for activity because fatty acids are bound in thioester linkage to the sulfhydryl of the prosthetic group.

The protein resides in the plastid. Its subcellular location is the chloroplast. The protein operates within lipid metabolism; fatty acid biosynthesis. Functionally, carrier of the growing fatty acid chain in fatty acid biosynthesis. The chain is Acyl carrier protein from Guillardia theta (Cryptophyte).